The chain runs to 175 residues: Translation initiation factor IF-3 (175 aa).

Belongs to the IF-3 family. Monomer.

It localises to the cytoplasm. IF-3 binds to the 30S ribosomal subunit and shifts the equilibrium between 70S ribosomes and their 50S and 30S subunits in favor of the free subunits, thus enhancing the availability of 30S subunits on which protein synthesis initiation begins. The chain is Translation initiation factor IF-3 from Staphylococcus aureus (strain NCTC 8325 / PS 47).